The following is a 266-amino-acid chain: Ubiquinone biosynthesis protein COQ4 homolog, mitochondrial (266 aa).

Residues H169, D170, H173, and E185 each contribute to the Zn(2+) site.

Belongs to the COQ4 family. As to quaternary structure, component of a multi-subunit COQ enzyme complex. Requires Zn(2+) as cofactor.

Its subcellular location is the mitochondrion inner membrane. The enzyme catalyses a 4-hydroxy-3-methoxy-5-(all-trans-polyprenyl)benzoate + H(+) = a 2-methoxy-6-(all-trans-polyprenyl)phenol + CO2. It participates in cofactor biosynthesis; ubiquinone biosynthesis. Lyase that catalyzes the C1-decarboxylation of 4-hydroxy-3-methoxy-5-(all-trans-polyprenyl)benzoic acid into 2-methoxy-6-(all-trans-polyprenyl)phenol during ubiquinone biosynthesis. The polypeptide is Ubiquinone biosynthesis protein COQ4 homolog, mitochondrial (Drosophila ananassae (Fruit fly)).